The primary structure comprises 260 residues: Hydroxyethylthiazole kinase (260 aa).

M38 lines the substrate pocket. 2 residues coordinate ATP: R114 and T159. G186 is a substrate binding site.

Belongs to the Thz kinase family. It depends on Mg(2+) as a cofactor.

It catalyses the reaction 5-(2-hydroxyethyl)-4-methylthiazole + ATP = 4-methyl-5-(2-phosphooxyethyl)-thiazole + ADP + H(+). It functions in the pathway cofactor biosynthesis; thiamine diphosphate biosynthesis; 4-methyl-5-(2-phosphoethyl)-thiazole from 5-(2-hydroxyethyl)-4-methylthiazole: step 1/1. Functionally, catalyzes the phosphorylation of the hydroxyl group of 4-methyl-5-beta-hydroxyethylthiazole (THZ). The sequence is that of Hydroxyethylthiazole kinase from Helicobacter pylori (strain G27).